The following is a 257-amino-acid chain: Imidazole glycerol phosphate synthase subunit HisF (257 aa).

Active-site residues include Asp-11 and Asp-130.

The protein belongs to the HisA/HisF family. As to quaternary structure, heterodimer of HisH and HisF.

It localises to the cytoplasm. It carries out the reaction 5-[(5-phospho-1-deoxy-D-ribulos-1-ylimino)methylamino]-1-(5-phospho-beta-D-ribosyl)imidazole-4-carboxamide + L-glutamine = D-erythro-1-(imidazol-4-yl)glycerol 3-phosphate + 5-amino-1-(5-phospho-beta-D-ribosyl)imidazole-4-carboxamide + L-glutamate + H(+). It participates in amino-acid biosynthesis; L-histidine biosynthesis; L-histidine from 5-phospho-alpha-D-ribose 1-diphosphate: step 5/9. In terms of biological role, IGPS catalyzes the conversion of PRFAR and glutamine to IGP, AICAR and glutamate. The HisF subunit catalyzes the cyclization activity that produces IGP and AICAR from PRFAR using the ammonia provided by the HisH subunit. The chain is Imidazole glycerol phosphate synthase subunit HisF from Aliivibrio fischeri (strain ATCC 700601 / ES114) (Vibrio fischeri).